The chain runs to 386 residues: TRIBOA-glucoside O-methyltransferase BX7 (386 aa).

Residues glycine 224, aspartate 248, methionine 270, and lysine 283 each contribute to the S-adenosyl-L-methionine site. The Proton acceptor role is filled by histidine 287.

It belongs to the class I-like SAM-binding methyltransferase superfamily. Cation-independent O-methyltransferase family. COMT subfamily. As to expression, expressed in seedlings and newly formed crown roots. Highest expression in the scutellar node. Low to non detectable levels in cob, tassel and mature organs like husk or leaves.

The catalysed reaction is TRIBOA beta-D-glucoside + S-adenosyl-L-methionine = DIMBOA beta-D-glucoside + S-adenosyl-L-homocysteine + H(+). O-methyltransferase involved in the benzoxazinoid glucoside biosynthesis. Can use 2,4,7-trihydroxy-2H-1,4-benzoxazin-3(4H)-one 2-D-glucoside (TRIBOA-glucoside) as substrate, but not aglucone TRIBOA, caffeic acid, ferulic acid, apigenin or quercetin. In Zea mays (Maize), this protein is TRIBOA-glucoside O-methyltransferase BX7 (BX7).